Consider the following 214-residue polypeptide: Probable GTP-binding protein EngB (214 aa).

The 175-residue stretch at 30–204 (EGFEVAFAGR…YTVLAGWMEL (175 aa)) folds into the EngB-type G domain. GTP contacts are provided by residues 38 to 45 (GRSNAGKS), 64 to 68 (GRTQL), 82 to 85 (DLPG), 149 to 152 (TKAD), and 182 to 185 (LFSA). Mg(2+) is bound by residues serine 45 and threonine 66.

Belongs to the TRAFAC class TrmE-Era-EngA-EngB-Septin-like GTPase superfamily. EngB GTPase family. Mg(2+) is required as a cofactor.

Functionally, necessary for normal cell division and for the maintenance of normal septation. The sequence is that of Probable GTP-binding protein EngB from Pseudomonas fluorescens (strain Pf0-1).